Consider the following 353-residue polypeptide: GTPase Obg (353 aa).

Residues 1–159 enclose the Obg domain; it reads MKFLDEAKVY…RWIWLRLKLI (159 aa). Residues 160 to 327 enclose the OBG-type G domain; the sequence is ADAGLVGLPN…ALRALVAVIG (168 aa). GTP-binding positions include 166 to 173, 191 to 195, 212 to 215, 279 to 282, and 308 to 310; these read GLPNAGKS, FTTLH, DIPG, NKID, and SGV. Mg(2+) contacts are provided by serine 173 and threonine 193.

The protein belongs to the TRAFAC class OBG-HflX-like GTPase superfamily. OBG GTPase family. Monomer. It depends on Mg(2+) as a cofactor.

Its subcellular location is the cytoplasm. In terms of biological role, an essential GTPase which binds GTP, GDP and possibly (p)ppGpp with moderate affinity, with high nucleotide exchange rates and a fairly low GTP hydrolysis rate. Plays a role in control of the cell cycle, stress response, ribosome biogenesis and in those bacteria that undergo differentiation, in morphogenesis control. This chain is GTPase Obg, found in Rhodopseudomonas palustris (strain ATCC BAA-98 / CGA009).